The chain runs to 85 residues: Large ribosomal subunit protein bL27 (85 aa).

Belongs to the bacterial ribosomal protein bL27 family.

The chain is Large ribosomal subunit protein bL27 from Pseudomonas fluorescens (strain ATCC BAA-477 / NRRL B-23932 / Pf-5).